Consider the following 251-residue polypeptide: MRRKIVAGNWKLHGTRAFATELVAQVAAHMPLAGVDVVILPPLPYLGDLIEDFEAHHLAFGAQDVSSNEKGAYTGEVSASMLVDVGAEYGLVGHSERRQYHQESSELVARKFAAAMHAGLIPVLCVGESLEQREAGQTEAILRAQLEPVLSLVGSAGFARAVVAYEPIWAIGTGRTATPDQAQAVHAFIRGEVAKADARIADSLPILYGGSVKPDNASELFSQPDVDGGLVGGASLVAEDFLAIARAAAAC.

Residue 9–11 coordinates substrate; that stretch reads NWK. The Electrophile role is filled by histidine 94. Glutamate 166 functions as the Proton acceptor in the catalytic mechanism. Substrate is bound by residues glycine 172, serine 211, and 232–233; that span reads GG.

It belongs to the triosephosphate isomerase family. As to quaternary structure, homodimer.

It localises to the cytoplasm. The catalysed reaction is D-glyceraldehyde 3-phosphate = dihydroxyacetone phosphate. The protein operates within carbohydrate biosynthesis; gluconeogenesis. Its pathway is carbohydrate degradation; glycolysis; D-glyceraldehyde 3-phosphate from glycerone phosphate: step 1/1. In terms of biological role, involved in the gluconeogenesis. Catalyzes stereospecifically the conversion of dihydroxyacetone phosphate (DHAP) to D-glyceraldehyde-3-phosphate (G3P). The polypeptide is Triosephosphate isomerase (Xanthomonas campestris pv. campestris (strain 8004)).